The chain runs to 465 residues: Ribulose bisphosphate carboxylase large chain (465 aa).

Lysine 4 carries the N6,N6,N6-trimethyllysine modification. The substrate site is built by asparagine 113 and threonine 163. The active-site Proton acceptor is lysine 165. Lysine 167 lines the substrate pocket. The Mg(2+) site is built by lysine 191, aspartate 193, and glutamate 194. The residue at position 191 (lysine 191) is an N6-carboxylysine. The active-site Proton acceptor is histidine 284. The substrate site is built by arginine 285, histidine 317, and serine 369.

The protein belongs to the RuBisCO large chain family. Type I subfamily. In terms of assembly, heterohexadecamer of 8 large chains and 8 small chains; disulfide-linked. The disulfide link is formed within the large subunit homodimers. The cofactor is Mg(2+). In terms of processing, the disulfide bond which can form in the large chain dimeric partners within the hexadecamer appears to be associated with oxidative stress and protein turnover.

The protein localises to the plastid. It is found in the chloroplast. It carries out the reaction 2 (2R)-3-phosphoglycerate + 2 H(+) = D-ribulose 1,5-bisphosphate + CO2 + H2O. The catalysed reaction is D-ribulose 1,5-bisphosphate + O2 = 2-phosphoglycolate + (2R)-3-phosphoglycerate + 2 H(+). RuBisCO catalyzes two reactions: the carboxylation of D-ribulose 1,5-bisphosphate, the primary event in carbon dioxide fixation, as well as the oxidative fragmentation of the pentose substrate in the photorespiration process. Both reactions occur simultaneously and in competition at the same active site. The sequence is that of Ribulose bisphosphate carboxylase large chain from Manilkara zapota (Sapodilla plum).